The sequence spans 69 residues: Magnetosome protein MamI (69 aa).

At 1 to 2 the chain is on the cytoplasmic side; sequence MP. Residues 3-23 traverse the membrane as a helical segment; that stretch reads SVIFGLLALAIGLLGLTAWWW. The Lumenal portion of the chain corresponds to 24–31; it reads SVTEFLRG. Residues 32 to 52 traverse the membrane as a helical segment; that stretch reads AVPVALIIFGLVALAAGVQSV. At 53 to 69 the chain is on the cytoplasmic side; sequence RVPPAGKRANSDPNIDG.

This sequence belongs to the magnetosome MamI protein family.

It is found in the magnetosome membrane. In terms of biological role, may be involved in an early stage of magnetosome nucleation. Not essential for formation of magnetosome membrane vesicles, it is probably functionally redundant with other proteins. May bind magnetite. One of 7 genes (mamLQBIEMO) able to induce magnetosome membrane biogenesis; coexpression of mamLQRBIEMO in a deletion of the 17 gene mamAB operon restores magnetosome vesicle formation but not magnetite biosynthesis. The chain is Magnetosome protein MamI from Magnetospirillum gryphiswaldense (strain DSM 6361 / JCM 21280 / NBRC 15271 / MSR-1).